Consider the following 665-residue polypeptide: Fructose-1,6-bisphosphatase class 3 (665 aa).

Belongs to the FBPase class 3 family. It depends on Mn(2+) as a cofactor.

It catalyses the reaction beta-D-fructose 1,6-bisphosphate + H2O = beta-D-fructose 6-phosphate + phosphate. It functions in the pathway carbohydrate biosynthesis; gluconeogenesis. This chain is Fructose-1,6-bisphosphatase class 3, found in Clostridium acetobutylicum (strain ATCC 824 / DSM 792 / JCM 1419 / IAM 19013 / LMG 5710 / NBRC 13948 / NRRL B-527 / VKM B-1787 / 2291 / W).